We begin with the raw amino-acid sequence, 958 residues long: Glycine dehydrogenase (decarboxylating) (958 aa).

Lysine 708 carries the post-translational modification N6-(pyridoxal phosphate)lysine.

This sequence belongs to the GcvP family. In terms of assembly, the glycine cleavage system is composed of four proteins: P, T, L and H. Requires pyridoxal 5'-phosphate as cofactor.

It carries out the reaction N(6)-[(R)-lipoyl]-L-lysyl-[glycine-cleavage complex H protein] + glycine + H(+) = N(6)-[(R)-S(8)-aminomethyldihydrolipoyl]-L-lysyl-[glycine-cleavage complex H protein] + CO2. The glycine cleavage system catalyzes the degradation of glycine. The P protein binds the alpha-amino group of glycine through its pyridoxal phosphate cofactor; CO(2) is released and the remaining methylamine moiety is then transferred to the lipoamide cofactor of the H protein. This is Glycine dehydrogenase (decarboxylating) from Photorhabdus laumondii subsp. laumondii (strain DSM 15139 / CIP 105565 / TT01) (Photorhabdus luminescens subsp. laumondii).